We begin with the raw amino-acid sequence, 545 residues long: Cytochrome bc1 complex cytochrome b subunit (545 aa).

Residues 54-74 (VCLYSFIIIILTGVYLTLFFH) traverse the membrane as a helical segment. The heme site is built by His-118 and His-132. Transmembrane regions (helical) follow at residues 122–142 (ALIF…TGAF), 150–170 (WLFG…GYSL), and 182–202 (FMEG…FFLF). Heme is bound by residues His-219 and His-234. The next 5 membrane-spanning stretches (helical) occupy residues 220 to 240 (ILLL…LVFY), 269 to 289 (AGGF…IATI), 335 to 355 (LVLG…AIAV), 385 to 405 (FGVA…NDLW), and 413 to 433 (INAI…VAFI).

This sequence belongs to the cytochrome b family. As to quaternary structure, the cytochrome bc1 complex is composed of a cytochrome b (QcrB), the Rieske iron-sulfur protein (QcrA) and a diheme cytochrome c (QcrC) subunit. Requires heme as cofactor.

The protein resides in the cell membrane. The enzyme catalyses a quinol + 2 Fe(III)-[cytochrome c](out) = a quinone + 2 Fe(II)-[cytochrome c](out) + 2 H(+)(out). In terms of biological role, cytochrome b subunit of the cytochrome bc1 complex, an essential component of the respiratory electron transport chain required for ATP synthesis. The bc1 complex catalyzes the oxidation of ubiquinol and the reduction of cytochrome c in the respiratory chain. The bc1 complex operates through a Q-cycle mechanism that couples electron transfer to generation of the proton gradient that drives ATP synthesis. The cytochrome b subunit contains two ubiquinol reactive sites: the oxidation (QP) site and the reduction (QN) site. The sequence is that of Cytochrome bc1 complex cytochrome b subunit (qcrB) from Streptomyces coelicolor (strain ATCC BAA-471 / A3(2) / M145).